The chain runs to 227 residues: Cytochrome c oxidase subunit 2 (227 aa).

Residues 1-14 (MAHATQVGLQDATS) lie on the Mitochondrial intermembrane side of the membrane. A helical transmembrane segment spans residues 15–45 (PIMEELISFHDHALMIIFLISFLVLYALFLT). The Mitochondrial matrix portion of the chain corresponds to 46–59 (LTTKLTNTNITDAQ). A helical transmembrane segment spans residues 60 to 87 (EMETVWTILPAIILVLIALPSLRILYLT). Over 88-227 (DEINDPSFTI…IFEMGPVFTL (140 aa)) the chain is Mitochondrial intermembrane. Residues His161, Cys196, Glu198, Cys200, His204, and Met207 each coordinate Cu cation. Glu198 contacts Mg(2+).

Belongs to the cytochrome c oxidase subunit 2 family. As to quaternary structure, component of the cytochrome c oxidase (complex IV, CIV), a multisubunit enzyme composed of 14 subunits. The complex is composed of a catalytic core of 3 subunits MT-CO1, MT-CO2 and MT-CO3, encoded in the mitochondrial DNA, and 11 supernumerary subunits COX4I, COX5A, COX5B, COX6A, COX6B, COX6C, COX7A, COX7B, COX7C, COX8 and NDUFA4, which are encoded in the nuclear genome. The complex exists as a monomer or a dimer and forms supercomplexes (SCs) in the inner mitochondrial membrane with NADH-ubiquinone oxidoreductase (complex I, CI) and ubiquinol-cytochrome c oxidoreductase (cytochrome b-c1 complex, complex III, CIII), resulting in different assemblies (supercomplex SCI(1)III(2)IV(1) and megacomplex MCI(2)III(2)IV(2)). Found in a complex with TMEM177, COA6, COX18, COX20, SCO1 and SCO2. Interacts with TMEM177 in a COX20-dependent manner. Interacts with COX20. Interacts with COX16. The cofactor is Cu cation.

It is found in the mitochondrion inner membrane. The catalysed reaction is 4 Fe(II)-[cytochrome c] + O2 + 8 H(+)(in) = 4 Fe(III)-[cytochrome c] + 2 H2O + 4 H(+)(out). Its function is as follows. Component of the cytochrome c oxidase, the last enzyme in the mitochondrial electron transport chain which drives oxidative phosphorylation. The respiratory chain contains 3 multisubunit complexes succinate dehydrogenase (complex II, CII), ubiquinol-cytochrome c oxidoreductase (cytochrome b-c1 complex, complex III, CIII) and cytochrome c oxidase (complex IV, CIV), that cooperate to transfer electrons derived from NADH and succinate to molecular oxygen, creating an electrochemical gradient over the inner membrane that drives transmembrane transport and the ATP synthase. Cytochrome c oxidase is the component of the respiratory chain that catalyzes the reduction of oxygen to water. Electrons originating from reduced cytochrome c in the intermembrane space (IMS) are transferred via the dinuclear copper A center (CU(A)) of subunit 2 and heme A of subunit 1 to the active site in subunit 1, a binuclear center (BNC) formed by heme A3 and copper B (CU(B)). The BNC reduces molecular oxygen to 2 water molecules using 4 electrons from cytochrome c in the IMS and 4 protons from the mitochondrial matrix. This chain is Cytochrome c oxidase subunit 2 (MT-CO2), found in Hylobates lar (Lar gibbon).